Reading from the N-terminus, the 346-residue chain is Dihydroorotase (346 aa).

The Zn(2+) site is built by His-14 and His-16. Residues 16–18 (HLR) and Asn-42 each bind substrate. The Zn(2+) site is built by Lys-100, His-137, and His-175. At Lys-100 the chain carries N6-carboxylysine. His-137 contacts substrate. Position 220 (Leu-220) interacts with substrate. Position 248 (Asp-248) interacts with Zn(2+). Residue Asp-248 is part of the active site. Substrate is bound by residues His-252 and Ala-264.

Belongs to the metallo-dependent hydrolases superfamily. DHOase family. Class II DHOase subfamily. Homodimer. It depends on Zn(2+) as a cofactor.

The catalysed reaction is (S)-dihydroorotate + H2O = N-carbamoyl-L-aspartate + H(+). Its pathway is pyrimidine metabolism; UMP biosynthesis via de novo pathway; (S)-dihydroorotate from bicarbonate: step 3/3. In terms of biological role, catalyzes the reversible cyclization of carbamoyl aspartate to dihydroorotate. The chain is Dihydroorotase from Ruegeria sp. (strain TM1040) (Silicibacter sp.).